A 69-amino-acid chain; its full sequence is FMRFamide-like neuropeptides 24 (69 aa).

The first 25 residues, 1–25, serve as a signal peptide directing secretion; sequence MLSSRTSSIILILAILVAIMAVAQC. Residues 26–51 constitute a propeptide that is removed on maturation; that stretch reads RNIQYDVEEMTPEAAFRYAQWGEIPH. F64 carries the post-translational modification Phenylalanine amide. The propeptide occupies 68 to 69; that stretch reads SI.

This sequence belongs to the FARP (FMRFamide related peptide) family.

The protein localises to the secreted. Probable FMRFamide-like neuropeptides. Plays a role in behaviors associated with a sleep-like state induced by stress (SIS), acting in concert with the FMRFamide related peptide flp-13 and neuropeptide-like protein nlp-8. The chain is FMRFamide-like neuropeptides 24 from Caenorhabditis elegans.